Here is a 247-residue protein sequence, read N- to C-terminus: MTYESFAYWYDKLMNEAPYDAWQSFVQKKLKQYGRQGAKRILDVGCGTGELAVRLAKEGFLVTGVDLSENMLAIAQAKAEAQQVTIEFFQQNMTELEGFSSFDCVTIFCDSLNYLLEESEVRQTFSRIYELLKEDGLLLFDVHSTYKMDHIFQDAIFTSNDEEISYIWSCYPLSLPHSVEHELTFFVRGDDGKYERHDELHRQCTYEIDQYKQWLTEAGFTVLEITADFTDEAPSETSERVFFVAKK.

It belongs to the methyltransferase superfamily.

Its function is as follows. May be a S-adenosyl-L-methionine (SAM)-dependent methyltransferase. This is Putative methyltransferase GWCH70_2453 from Geobacillus sp. (strain WCH70).